Here is a 116-residue protein sequence, read N- to C-terminus: Flagellar hook-basal body complex protein FliE (116 aa).

This sequence belongs to the FliE family.

The protein resides in the bacterial flagellum basal body. The chain is Flagellar hook-basal body complex protein FliE from Rhizobium rhizogenes (strain K84 / ATCC BAA-868) (Agrobacterium radiobacter).